We begin with the raw amino-acid sequence, 383 residues long: Fatty acid hydroxylase ahd1 (383 aa).

4 helical membrane passes run 84-104, 123-143, 172-192, and 214-236; these read VMGLTTHFVTITMAIVFNKSW, TVHTWILLSTCQLLVIGLFAL, LIPVVLFNLVVVNTISNIIYY, and VAQWLVCLLMEDIGFYTVHRALH. The 125-residue stretch at 217-341 folds into the Fatty acid hydroxylase domain; the sequence is WLVCLLMEDI…VGLLDAIFKT (125 aa). Asn342 carries an N-linked (GlcNAc...) asparagine glycan.

Belongs to the sterol desaturase family.

Its subcellular location is the membrane. It functions in the pathway secondary metabolite biosynthesis. Its function is as follows. Fatty acid hydroxylase; part of the gene cluster that mediates the biosynthesis of the glycolipid biosurfactant ustilagic acid (UA). UA is a secreted cellobiose glycolipid that is toxic for many microorganisms and confers biocontrol activity to U.maydis. UA consists of 15,16-dihydroxypalmitic or 2,15,16-trihydroxypalmitic acid, which is O-glycosidically linked to cellobiose at its terminal hydroxyl group. In addition, the cellobiose moiety is acetylated and acylated with a short-chain hydroxy fatty acid. UA biosynthesis starts with omega-hydroxylation of palmitic acid catalyzed by the cytochrome P450 monooxygenase cyp1. Terminal hydroxylation of palmitic acid precedes subterminal hydroxylation catalyzed by the cytochrome P450 monooxygenase cyp2. Sequential glucosylation of the hydroxy fatty acid is probably catalyzed by the glycosyltransferase ugt1. The cellobiose lipid is further decorated by acetylation of the proximal glucose residue and by acylation with a short-chain beta-hydroxy fatty acid at the distal glucose residue. The acyltransferase uat1 may be a good candidate for catalyzing either acetylation or acylation of the cellobiose lipid. The fatty acid synthase fas2 may be involved in synthesis of the carbon backbone of the short-chain beta-hydroxy fatty acid esterified to the cellobiose disaccharide. The secreted UA consists of a mixture of both alpha-hydroxylated and non-hydroxylated glycolipids; therefore, alpha-hydroxylation of the long-chain fatty, catalyzed by the fatty acid hydroxylase ahd1, occurs late in UA biosynthesis and may be the last step before secretion. The protein is Fatty acid hydroxylase ahd1 of Mycosarcoma maydis (Corn smut fungus).